A 481-amino-acid chain; its full sequence is Glutamyl-tRNA(Gln) amidotransferase subunit A (481 aa).

Catalysis depends on charge relay system residues Lys-76 and Ser-151. The Acyl-ester intermediate role is filled by Ser-175.

It belongs to the amidase family. GatA subfamily. In terms of assembly, heterotrimer of A, B and C subunits.

The catalysed reaction is L-glutamyl-tRNA(Gln) + L-glutamine + ATP + H2O = L-glutaminyl-tRNA(Gln) + L-glutamate + ADP + phosphate + H(+). Its function is as follows. Allows the formation of correctly charged Gln-tRNA(Gln) through the transamidation of misacylated Glu-tRNA(Gln) in organisms which lack glutaminyl-tRNA synthetase. The reaction takes place in the presence of glutamine and ATP through an activated gamma-phospho-Glu-tRNA(Gln). The sequence is that of Glutamyl-tRNA(Gln) amidotransferase subunit A from Neisseria meningitidis serogroup A / serotype 4A (strain DSM 15465 / Z2491).